An 889-amino-acid chain; its full sequence is Putative receptor-like protein kinase At3g46340 (889 aa).

The N-terminal stretch at 1–25 (MEFPHSVLLVVLIIATFAISNLVQA) is a signal peptide. The Extracellular segment spans residues 26–514 (EEDQEGFISL…VITKKKFPVM (489 aa)). Residues Asn185, Asn239, Asn259, Asn292, Asn316, Asn342, Asn366, Asn419, Asn435, Asn448, Asn467, and Asn474 are each glycosylated (N-linked (GlcNAc...) asparagine). LRR repeat units lie at residues 414-437 (RITS…QNLT), 438-460 (HLDK…LASM), and 462-483 (SLSF…ALLK). Residues 515-535 (IVALVSSAVVVILVVLVLIFV) form a helical membrane-spanning segment. Residues 536 to 889 (FKKKKPSNLE…FDTKAVPSAR (354 aa)) are Cytoplasmic-facing. Residues 544–566 (LEDLPPSSNTPRENITSTSISDT) form a disordered region. The Protein kinase domain maps to 585-874 (KNLQRPLGEG…TQGMDSHSSF (290 aa)). Residues 591–599 (LGEGGFGVV) and Lys614 each bind ATP. Tyr659 bears the Phosphotyrosine mark. The Proton acceptor role is filled by Asp711. Ser745 bears the Phosphoserine mark. A phosphothreonine mark is found at Thr746 and Thr751. A Phosphotyrosine modification is found at Tyr759. A disordered region spans residues 863–889 (NKTQGMDSHSSFEQSMSFDTKAVPSAR). Residues 864–880 (KTQGMDSHSSFEQSMSF) show a composition bias toward polar residues.

This sequence belongs to the protein kinase superfamily. Ser/Thr protein kinase family.

Its subcellular location is the cell membrane. The catalysed reaction is L-seryl-[protein] + ATP = O-phospho-L-seryl-[protein] + ADP + H(+). It catalyses the reaction L-threonyl-[protein] + ATP = O-phospho-L-threonyl-[protein] + ADP + H(+). The protein is Putative receptor-like protein kinase At3g46340 of Arabidopsis thaliana (Mouse-ear cress).